Reading from the N-terminus, the 442-residue chain is Asparagine--tRNA ligase (442 aa).

This sequence belongs to the class-II aminoacyl-tRNA synthetase family. In terms of assembly, homodimer.

It is found in the cytoplasm. It catalyses the reaction tRNA(Asn) + L-asparagine + ATP = L-asparaginyl-tRNA(Asn) + AMP + diphosphate + H(+). The polypeptide is Asparagine--tRNA ligase (Koribacter versatilis (strain Ellin345)).